Consider the following 220-residue polypeptide: Dual specificity protein phosphatase 19 (220 aa).

An N-acetylmethionine modification is found at methionine 1. The Tyrosine-protein phosphatase domain occupies 64–205 (QVGVIKPWLL…LRTYQVGKES (142 aa)). Cysteine 149 acts as the Phosphocysteine intermediate in catalysis.

Belongs to the protein-tyrosine phosphatase family. Non-receptor class dual specificity subfamily.

The enzyme catalyses O-phospho-L-tyrosyl-[protein] + H2O = L-tyrosyl-[protein] + phosphate. It carries out the reaction O-phospho-L-seryl-[protein] + H2O = L-seryl-[protein] + phosphate. The catalysed reaction is O-phospho-L-threonyl-[protein] + H2O = L-threonyl-[protein] + phosphate. Phosphatase activity is enhanced by Ca(2+) and Mn(2+). Its function is as follows. Has a dual specificity toward Ser/Thr and Tyr-containing proteins. This chain is Dual specificity protein phosphatase 19, found in Mus musculus (Mouse).